Here is a 200-residue protein sequence, read N- to C-terminus: ATP-dependent Clp protease proteolytic subunit (200 aa).

Ser-96 functions as the Nucleophile in the catalytic mechanism. His-121 is an active-site residue.

This sequence belongs to the peptidase S14 family. Fourteen ClpP subunits assemble into 2 heptameric rings which stack back to back to give a disk-like structure with a central cavity, resembling the structure of eukaryotic proteasomes.

It is found in the cytoplasm. The enzyme catalyses Hydrolysis of proteins to small peptides in the presence of ATP and magnesium. alpha-casein is the usual test substrate. In the absence of ATP, only oligopeptides shorter than five residues are hydrolyzed (such as succinyl-Leu-Tyr-|-NHMec, and Leu-Tyr-Leu-|-Tyr-Trp, in which cleavage of the -Tyr-|-Leu- and -Tyr-|-Trp bonds also occurs).. In terms of biological role, cleaves peptides in various proteins in a process that requires ATP hydrolysis. Has a chymotrypsin-like activity. Plays a major role in the degradation of misfolded proteins. In Leuconostoc citreum (strain KM20), this protein is ATP-dependent Clp protease proteolytic subunit.